The chain runs to 419 residues: Napsin-A (419 aa).

Residues Met1 to Leu16 form the signal peptide. The region spanning Tyr73–Ala394 is the Peptidase A1 domain. Asn85 is a glycosylation site (N-linked (GlcNAc...) asparagine). The active site involves Asp91. Cys104 and Cys111 are joined by a disulfide. 2 N-linked (GlcNAc...) asparagine glycosylation sites follow: Asn128 and Asn149. Residues Cys269 and Cys273 are joined by a disulfide bond. Asp278 is an active-site residue. The cysteines at positions 312 and 349 are disulfide-linked. Residue Asn331 is glycosylated (N-linked (GlcNAc...) asparagine). Positions Val391 to Gly419 are disordered.

The protein belongs to the peptidase A1 family. In terms of tissue distribution, expressed at the highest levels in the kidney, at a moderate level in the lung, and at low levels in the spleen and adipose tissue.

The protein resides in the secreted. Functionally, may be involved in processing of pneumocyte surfactant precursors. The protein is Napsin-A (Napsa) of Mus musculus (Mouse).